A 223-amino-acid polypeptide reads, in one-letter code: Pyridoxine/pyridoxamine 5'-phosphate oxidase (223 aa).

Substrate-binding positions include 8–11 (RVDY) and Lys-65. Residues 60-65 (RTVLLK), 75-76 (YT), Arg-81, Lys-82, and Gln-104 contribute to the FMN site. Substrate is bound by residues Tyr-122, Arg-126, and Ser-130. FMN is bound by residues 139–140 (QS) and Trp-188. Residue 194-196 (RLH) coordinates substrate. Arg-198 serves as a coordination point for FMN.

It belongs to the pyridoxamine 5'-phosphate oxidase family. Homodimer. FMN serves as cofactor.

It catalyses the reaction pyridoxamine 5'-phosphate + O2 + H2O = pyridoxal 5'-phosphate + H2O2 + NH4(+). It carries out the reaction pyridoxine 5'-phosphate + O2 = pyridoxal 5'-phosphate + H2O2. The protein operates within cofactor metabolism; pyridoxal 5'-phosphate salvage; pyridoxal 5'-phosphate from pyridoxamine 5'-phosphate: step 1/1. It functions in the pathway cofactor metabolism; pyridoxal 5'-phosphate salvage; pyridoxal 5'-phosphate from pyridoxine 5'-phosphate: step 1/1. Its function is as follows. Catalyzes the oxidation of either pyridoxine 5'-phosphate (PNP) or pyridoxamine 5'-phosphate (PMP) into pyridoxal 5'-phosphate (PLP). This is Pyridoxine/pyridoxamine 5'-phosphate oxidase from Kineococcus radiotolerans (strain ATCC BAA-149 / DSM 14245 / SRS30216).